Reading from the N-terminus, the 460-residue chain is Spermatogenesis-defective protein 39 homolog (460 aa).

Threonine 21 is subject to Phosphothreonine. Positions 70 to 101 are disordered; sequence SIKETAGSSGSTSEGREQMKGRNSFYTQLPKP. Positions 73-82 are enriched in low complexity; the sequence is ETAGSSGSTS. The residue at position 115 (threonine 115) is a Phosphothreonine. A phosphoserine mark is found at serine 119, serine 122, and serine 128. Polar residues predominate over residues 121–133; sequence QSLSDALSDTPAK. The tract at residues 121-141 is disordered; the sequence is QSLSDALSDTPAKTYSPELGR. Threonine 130 carries the post-translational modification Phosphothreonine.

The protein belongs to the SPE39 family. As to quaternary structure, interacts with VPS33B. Associates with the homotypic fusion and vacuole protein sorting (HOPS) complex; impaired by VPS33B. Interacts with RAB11A.

Its subcellular location is the cytoplasm. It is found in the cytoplasmic vesicle. The protein localises to the early endosome. The protein resides in the recycling endosome. It localises to the late endosome. Functionally, proposed to be involved in endosomal maturation implicating in part VPS33B. In epithelial cells, the VPS33B:VIPAS39 complex may play a role in the apical RAB11A-dependent recycling pathway and in the maintenance of the apical-basolateral polarity. May play a role in lysosomal trafficking, probably via association with the core HOPS complex in a discrete population of endosomes; the functions seems to be independent of VPS33B. May play a role in vesicular trafficking during spermatogenesis. May be involved in direct or indirect transcriptional regulation of E-cadherin. The sequence is that of Spermatogenesis-defective protein 39 homolog (Vipas39) from Rattus norvegicus (Rat).